A 257-amino-acid polypeptide reads, in one-letter code: Ribonuclease PH (257 aa).

Phosphate contacts are provided by residues R87 and 125-127 (GTR).

This sequence belongs to the RNase PH family. As to quaternary structure, homohexameric ring arranged as a trimer of dimers.

It carries out the reaction tRNA(n+1) + phosphate = tRNA(n) + a ribonucleoside 5'-diphosphate. Phosphorolytic 3'-5' exoribonuclease that plays an important role in tRNA 3'-end maturation. Removes nucleotide residues following the 3'-CCA terminus of tRNAs; can also add nucleotides to the ends of RNA molecules by using nucleoside diphosphates as substrates, but this may not be physiologically important. Probably plays a role in initiation of 16S rRNA degradation (leading to ribosome degradation) during starvation. This chain is Ribonuclease PH, found in Geobacillus kaustophilus (strain HTA426).